Here is a 524-residue protein sequence, read N- to C-terminus: uncharacterized protein (524 aa).

Residues 1–65 form a disordered region; sequence MSDPFFTRPE…IDEENEDTYE (65 aa). Over residues 21–32 the composition is skewed to basic and acidic residues; that stretch reads SKREKENQKLER. The segment covering 51-64 has biased composition (acidic residues); sequence GFEDEIDEENEDTY. WD repeat units follow at residues 131-176, 206-245, 248-287, 290-329, 342-380, 409-448, and 457-503; these read IETA…DTEN, DHVK…PQHC, HHRD…YIET, GHQD…QLVF, YMEG…PLFT, PQPR…RSFE, and SVYG…PNSG.

The protein localises to the nucleus. This is an uncharacterized protein from Schizosaccharomyces pombe (strain 972 / ATCC 24843) (Fission yeast).